The primary structure comprises 397 residues: Putative serine/threonine-protein kinase R301 (397 aa).

The region spanning 25-397 (QIKSTSVGSG…IIRHFNSPRL (373 aa)) is the Protein kinase domain. ATP is bound by residues 31–39 (VGSGGSDNI) and Lys53. Residue Asp218 is the Proton acceptor of the active site.

It belongs to the protein kinase superfamily. Ser/Thr protein kinase family.

Its subcellular location is the virion. The enzyme catalyses L-seryl-[protein] + ATP = O-phospho-L-seryl-[protein] + ADP + H(+). It carries out the reaction L-threonyl-[protein] + ATP = O-phospho-L-threonyl-[protein] + ADP + H(+). This is Putative serine/threonine-protein kinase R301 from Acanthamoeba polyphaga (Amoeba).